The following is a 109-amino-acid chain: Large ribosomal subunit protein uL24 (109 aa).

This sequence belongs to the universal ribosomal protein uL24 family. As to quaternary structure, part of the 50S ribosomal subunit.

Its function is as follows. One of two assembly initiator proteins, it binds directly to the 5'-end of the 23S rRNA, where it nucleates assembly of the 50S subunit. Functionally, one of the proteins that surrounds the polypeptide exit tunnel on the outside of the subunit. The sequence is that of Large ribosomal subunit protein uL24 from Mesoplasma florum (strain ATCC 33453 / NBRC 100688 / NCTC 11704 / L1) (Acholeplasma florum).